Reading from the N-terminus, the 329-residue chain is Probable fructokinase-2 (329 aa).

This sequence belongs to the carbohydrate kinase PfkB family.

The catalysed reaction is D-fructose + ATP = D-fructose 6-phosphate + ADP + H(+). It participates in glycan biosynthesis; starch biosynthesis. Functionally, may play an important role in maintaining the flux of carbon towards starch formation. The polypeptide is Probable fructokinase-2 (Arabidopsis thaliana (Mouse-ear cress)).